We begin with the raw amino-acid sequence, 305 residues long: Dihydroorotate dehydrogenase B (NAD(+)), catalytic subunit (305 aa).

FMN-binding positions include Ser-21 and 45–46; that span reads KA. Residues Lys-45 and 69–73 each bind substrate; that span reads NAIGL. The FMN site is built by Asn-99 and Asn-127. Substrate is bound at residue Asn-127. Cys-130 serves as the catalytic Nucleophile. The FMN site is built by Lys-165 and Ile-190. Residue 191–192 coordinates substrate; the sequence is NT. FMN contacts are provided by residues Gly-216, 242–243, and 264–265; these read GG and GT.

It belongs to the dihydroorotate dehydrogenase family. Type 1 subfamily. As to quaternary structure, heterotetramer of 2 PyrK and 2 PyrD type B subunits. FMN serves as cofactor.

It localises to the cytoplasm. The enzyme catalyses (S)-dihydroorotate + NAD(+) = orotate + NADH + H(+). It participates in pyrimidine metabolism; UMP biosynthesis via de novo pathway; orotate from (S)-dihydroorotate (NAD(+) route): step 1/1. Its function is as follows. Catalyzes the conversion of dihydroorotate to orotate with NAD(+) as electron acceptor. The polypeptide is Dihydroorotate dehydrogenase B (NAD(+)), catalytic subunit (pyrD) (Staphylococcus carnosus (strain TM300)).